The primary structure comprises 292 residues: Protoheme IX farnesyltransferase (292 aa).

A run of 8 helical transmembrane segments spans residues 15–35 (YLVLTKPGIVSLVLITTLGGM), 49–69 (FWTLLGTGLAAAGSAVLNMVI), 104–124 (VFSLVIMLTFVGVLPALLVAL), 147–167 (IGGISGALPPVIGYVAASGSV), 171–191 (AIALFLLMFMWQPPHFWVLAL), 218–238 (TLLYTASLFPVSLIPYLTGLV), 242–262 (YFVVAVVMNLIYLGLTLKFFF), and 271–291 (LFFFSIIYLAVLFGTMIVDMV).

It belongs to the UbiA prenyltransferase family. Protoheme IX farnesyltransferase subfamily.

The protein resides in the cell inner membrane. It carries out the reaction heme b + (2E,6E)-farnesyl diphosphate + H2O = Fe(II)-heme o + diphosphate. It participates in porphyrin-containing compound metabolism; heme O biosynthesis; heme O from protoheme: step 1/1. In terms of biological role, converts heme B (protoheme IX) to heme O by substitution of the vinyl group on carbon 2 of heme B porphyrin ring with a hydroxyethyl farnesyl side group. This is Protoheme IX farnesyltransferase from Aquifex aeolicus (strain VF5).